A 250-amino-acid polypeptide reads, in one-letter code: Homeobox protein Dlx4a (250 aa).

A DNA-binding region (homeobox) is located at residues 123-182; it reads IRKPRTIYSSLQLQALNQRFQQTQYLALPERADLAAKLGLTQTQVKIWFQNKRSKYKKIM. Residues 182–202 are disordered; sequence MKHGSSGPEGEHLQAASASGA.

It belongs to the distal-less homeobox family.

Its subcellular location is the nucleus. This chain is Homeobox protein Dlx4a (dlx4a), found in Danio rerio (Zebrafish).